Consider the following 167-residue polypeptide: Xanthine-guanine phosphoribosyltransferase (167 aa).

5-phospho-alpha-D-ribose 1-diphosphate is bound by residues arginine 47–glycine 48, glutamine 79, and aspartate 102–threonine 110. Glutamine 79 contacts GMP. Residue aspartate 103 coordinates Mg(2+). Residues aspartate 106 and isoleucine 149 each coordinate guanine. Aspartate 106 and isoleucine 149 together coordinate xanthine. GMP contacts are provided by residues aspartate 106 to threonine 110 and tryptophan 148 to isoleucine 149.

Belongs to the purine/pyrimidine phosphoribosyltransferase family. XGPT subfamily. As to quaternary structure, homotetramer. Mg(2+) is required as a cofactor.

It localises to the cell inner membrane. It catalyses the reaction GMP + diphosphate = guanine + 5-phospho-alpha-D-ribose 1-diphosphate. The catalysed reaction is XMP + diphosphate = xanthine + 5-phospho-alpha-D-ribose 1-diphosphate. The enzyme catalyses IMP + diphosphate = hypoxanthine + 5-phospho-alpha-D-ribose 1-diphosphate. It functions in the pathway purine metabolism; GMP biosynthesis via salvage pathway; GMP from guanine: step 1/1. The protein operates within purine metabolism; XMP biosynthesis via salvage pathway; XMP from xanthine: step 1/1. In terms of biological role, purine salvage pathway enzyme that catalyzes the transfer of the ribosyl-5-phosphate group from 5-phospho-alpha-D-ribose 1-diphosphate (PRPP) to the N9 position of the 6-oxopurines guanine and xanthine to form the corresponding ribonucleotides GMP (guanosine 5'-monophosphate) and XMP (xanthosine 5'-monophosphate), with the release of PPi. To a lesser extent, also acts on hypoxanthine. This is Xanthine-guanine phosphoribosyltransferase from Cereibacter sphaeroides (strain ATCC 17029 / ATH 2.4.9) (Rhodobacter sphaeroides).